A 734-amino-acid chain; its full sequence is Photosystem I P700 chlorophyll a apoprotein A2 (734 aa).

8 consecutive transmembrane segments (helical) span residues 46 to 69, 135 to 158, 175 to 199, 273 to 291, 330 to 353, 369 to 395, 417 to 439, and 517 to 535; these read IFAS…FHVA, LYFG…LHLQ, LNHH…HVAI, IAHH…GHMY, LHMQ…QHMY, AALY…IFFV, AIIS…LYIH, and FLVH…LILV. [4Fe-4S] cluster-binding residues include cysteine 559 and cysteine 568. 2 consecutive transmembrane segments (helical) span residues 575–596 and 643–665; these read AFYL…YWHW and QAVW…MFLI. Residues histidine 654, methionine 662, and tyrosine 670 each coordinate chlorophyll a. Tryptophan 671 serves as a coordination point for phylloquinone. Residues 707 to 727 traverse the membrane as a helical segment; that stretch reads LVGLAHFTVGFIFTFAPFVIA.

The protein belongs to the PsaA/PsaB family. The PsaA/B heterodimer binds the P700 chlorophyll special pair and subsequent electron acceptors. PSI consists of a core antenna complex that captures photons, and an electron transfer chain that converts photonic excitation into a charge separation. The eukaryotic PSI reaction center is composed of at least 11 subunits. Requires P700 is a chlorophyll a/chlorophyll a' dimer, A0 is one or more chlorophyll a, A1 is one or both phylloquinones and FX is a shared 4Fe-4S iron-sulfur center. as cofactor.

Its subcellular location is the plastid. The protein localises to the chloroplast thylakoid membrane. The enzyme catalyses reduced [plastocyanin] + hnu + oxidized [2Fe-2S]-[ferredoxin] = oxidized [plastocyanin] + reduced [2Fe-2S]-[ferredoxin]. Functionally, psaA and PsaB bind P700, the primary electron donor of photosystem I (PSI), as well as the electron acceptors A0, A1 and FX. PSI is a plastocyanin/cytochrome c6-ferredoxin oxidoreductase, converting photonic excitation into a charge separation, which transfers an electron from the donor P700 chlorophyll pair to the spectroscopically characterized acceptors A0, A1, FX, FA and FB in turn. Oxidized P700 is reduced on the lumenal side of the thylakoid membrane by plastocyanin or cytochrome c6. The sequence is that of Photosystem I P700 chlorophyll a apoprotein A2 from Emiliania huxleyi (Coccolithophore).